Consider the following 290-residue polypeptide: Ribosomal RNA small subunit methyltransferase A (290 aa).

S-adenosyl-L-methionine-binding residues include Asn-27, Leu-29, Gly-54, Glu-75, Asp-100, and Asn-125.

Belongs to the class I-like SAM-binding methyltransferase superfamily. rRNA adenine N(6)-methyltransferase family. RsmA subfamily.

Its subcellular location is the cytoplasm. It carries out the reaction adenosine(1518)/adenosine(1519) in 16S rRNA + 4 S-adenosyl-L-methionine = N(6)-dimethyladenosine(1518)/N(6)-dimethyladenosine(1519) in 16S rRNA + 4 S-adenosyl-L-homocysteine + 4 H(+). Specifically dimethylates two adjacent adenosines (A1518 and A1519) in the loop of a conserved hairpin near the 3'-end of 16S rRNA in the 30S particle. May play a critical role in biogenesis of 30S subunits. This Streptococcus agalactiae serotype V (strain ATCC BAA-611 / 2603 V/R) protein is Ribosomal RNA small subunit methyltransferase A.